The chain runs to 343 residues: 5-amino-6-(D-ribitylamino)uracil--L-tyrosine 4-hydroxyphenyl transferase (343 aa).

One can recognise a Radical SAM core domain in the interval 39–268; sequence VTYVVNRNIN…AIARILLYPE (230 aa). Residues C53, C57, and C60 each contribute to the [4Fe-4S] cluster site.

Belongs to the radical SAM superfamily. CofH family. As to quaternary structure, consists of two subunits, CofG and CofH. It depends on [4Fe-4S] cluster as a cofactor.

It catalyses the reaction 5-amino-6-(D-ribitylamino)uracil + L-tyrosine + S-adenosyl-L-methionine = 5-amino-5-(4-hydroxybenzyl)-6-(D-ribitylimino)-5,6-dihydrouracil + 2-iminoacetate + 5'-deoxyadenosine + L-methionine + H(+). It functions in the pathway cofactor biosynthesis; coenzyme F0 biosynthesis. Functionally, catalyzes the radical-mediated synthesis of 5-amino-5-(4-hydroxybenzyl)-6-(D-ribitylimino)-5,6-dihydrouracil from 5-amino-6-(D-ribitylamino)uracil and L-tyrosine. The sequence is that of 5-amino-6-(D-ribitylamino)uracil--L-tyrosine 4-hydroxyphenyl transferase from Archaeoglobus fulgidus (strain ATCC 49558 / DSM 4304 / JCM 9628 / NBRC 100126 / VC-16).